Consider the following 228-residue polypeptide: NAD(P)H-hydrate epimerase (228 aa).

In terms of domain architecture, YjeF N-terminal spans A9 to L215. N58–D62 provides a ligand contact to (6S)-NADPHX. Residues N59 and D123 each contribute to the K(+) site. Residues G127–P133 and D156 contribute to the (6S)-NADPHX site. S159 serves as a coordination point for K(+).

The protein belongs to the NnrE/AIBP family. K(+) serves as cofactor.

It catalyses the reaction (6R)-NADHX = (6S)-NADHX. The enzyme catalyses (6R)-NADPHX = (6S)-NADPHX. Functionally, catalyzes the epimerization of the S- and R-forms of NAD(P)HX, a damaged form of NAD(P)H that is a result of enzymatic or heat-dependent hydration. This is a prerequisite for the S-specific NAD(P)H-hydrate dehydratase to allow the repair of both epimers of NAD(P)HX. This Anopheles darlingi (Mosquito) protein is NAD(P)H-hydrate epimerase.